The primary structure comprises 405 residues: CMP-sialic acid transporter 5 (405 aa).

Residues Met-1–Asn-43 are Cytoplasmic-facing. The chain crosses the membrane as a helical span at residues Val-44–Ser-64. The Lumenal segment spans residues Lys-65 to Pro-74. Residues Ile-75–Ile-95 form a helical membrane-spanning segment. Residues Gln-96 to Ala-121 lie on the Cytoplasmic side of the membrane. Residues Leu-122–Leu-142 form a helical membrane-spanning segment. Residues Tyr-143 to Ser-147 are Lumenal-facing. Residues Thr-148–Met-168 form a helical membrane-spanning segment. The Cytoplasmic portion of the chain corresponds to Lys-169–Arg-171. A helical transmembrane segment spans residues Phe-172–Leu-192. Residues Arg-193–Thr-200 are Lumenal-facing. The helical transmembrane segment at Ala-201–Pro-221 threads the bilayer. The Cytoplasmic portion of the chain corresponds to Ser-222–Asn-244. The chain crosses the membrane as a helical span at residues Leu-245–Phe-265. Over Gln-266–Thr-281 the chain is Lumenal. Residues Met-282–Ala-302 form a helical membrane-spanning segment. Topologically, residues Asp-303–Ser-322 are cytoplasmic. Residues Ala-323–Ile-343 form a helical membrane-spanning segment. At Ser-344–Thr-405 the chain is on the lumenal side. A disordered region spans residues Asp-368 to Thr-405. Residues Asp-389 to Thr-405 show a composition bias toward basic and acidic residues.

Belongs to the nucleotide-sugar transporter family. CMP-Sialate:CMP antiporter (TC 2.A.7.12) subfamily.

The protein resides in the golgi apparatus membrane. In terms of biological role, sugar transporter involved in the transport of CMP-sialic acid from the cytoplasm into the Golgi. May transport important nucleotide sugars such as CMP-Kdo (2-keto-3-deoxy-D-manno-octulosonic acid) in physiological conditions. The sequence is that of CMP-sialic acid transporter 5 from Oryza sativa subsp. japonica (Rice).